A 220-amino-acid polypeptide reads, in one-letter code: Probable GTP-binding protein EngB (220 aa).

The region spanning 26–200 (EGIEIAFAGR…RAKLDEWYAP (175 aa)) is the EngB-type G domain. GTP-binding positions include 34–41 (GRSNTGKS), 61–65 (GRTQL), 79–82 (DLPG), 146–149 (TKAD), and 179–181 (FSS). 2 residues coordinate Mg(2+): Ser-41 and Thr-63.

The protein belongs to the TRAFAC class TrmE-Era-EngA-EngB-Septin-like GTPase superfamily. EngB GTPase family. Mg(2+) is required as a cofactor.

Functionally, necessary for normal cell division and for the maintenance of normal septation. In Vibrio cholerae serotype O1 (strain ATCC 39541 / Classical Ogawa 395 / O395), this protein is Probable GTP-binding protein EngB.